We begin with the raw amino-acid sequence, 772 residues long: DNA ligase (772 aa).

NAD(+) is bound by residues 80 to 84 (DAEYD), 130 to 131 (SL), and Glu-160. Catalysis depends on Lys-162, which acts as the N6-AMP-lysine intermediate. Arg-183, Glu-220, Lys-336, and Lys-360 together coordinate NAD(+). Zn(2+) contacts are provided by Cys-454, Cys-457, Cys-473, and Cys-479. Positions 685 to 772 (APEQTLEGLT…NGPQGITTIG (88 aa)) constitute a BRCT domain.

This sequence belongs to the NAD-dependent DNA ligase family. LigA subfamily. Requires Mg(2+) as cofactor. Mn(2+) serves as cofactor.

It carries out the reaction NAD(+) + (deoxyribonucleotide)n-3'-hydroxyl + 5'-phospho-(deoxyribonucleotide)m = (deoxyribonucleotide)n+m + AMP + beta-nicotinamide D-nucleotide.. Functionally, DNA ligase that catalyzes the formation of phosphodiester linkages between 5'-phosphoryl and 3'-hydroxyl groups in double-stranded DNA using NAD as a coenzyme and as the energy source for the reaction. It is essential for DNA replication and repair of damaged DNA. The protein is DNA ligase of Cutibacterium acnes (strain DSM 16379 / KPA171202) (Propionibacterium acnes).